The following is a 601-amino-acid chain: Glutathione-regulated potassium-efflux system protein KefB (601 aa).

13 helical membrane-spanning segments follow: residues serine 4–alanine 24, isoleucine 29–phenylalanine 49, glutamate 55–leucine 75, isoleucine 87–methionine 107, alanine 115–methionine 135, valine 152–glycine 172, histidine 177–glycine 197, phenylalanine 207–glycine 227, leucine 230–leucine 250, glycine 268–tyrosine 288, leucine 291–leucine 311, phenylalanine 326–serine 346, and alanine 356–isoleucine 376. The RCK N-terminal domain maps to lysine 400 to threonine 519.

Belongs to the monovalent cation:proton antiporter 2 (CPA2) transporter (TC 2.A.37) family. KefB subfamily. As to quaternary structure, interacts with the regulatory subunit KefG.

It is found in the cell inner membrane. Functionally, pore-forming subunit of a potassium efflux system that confers protection against electrophiles. Catalyzes K(+)/H(+) antiport. The sequence is that of Glutathione-regulated potassium-efflux system protein KefB from Klebsiella pneumoniae subsp. pneumoniae (strain ATCC 700721 / MGH 78578).